A 313-amino-acid chain; its full sequence is Ribosomal RNA small subunit methyltransferase H (313 aa).

Residues 48 to 50 (GGH), D68, F102, D120, and Q127 each bind S-adenosyl-L-methionine. Positions 290 to 313 (TATEEEIDRNPRSRSAKLRAAARK) are disordered. Basic residues predominate over residues 301–313 (RSRSAKLRAAARK).

Belongs to the methyltransferase superfamily. RsmH family.

The protein resides in the cytoplasm. The enzyme catalyses cytidine(1402) in 16S rRNA + S-adenosyl-L-methionine = N(4)-methylcytidine(1402) in 16S rRNA + S-adenosyl-L-homocysteine + H(+). Specifically methylates the N4 position of cytidine in position 1402 (C1402) of 16S rRNA. The protein is Ribosomal RNA small subunit methyltransferase H of Koribacter versatilis (strain Ellin345).